The chain runs to 338 residues: tRNA N6-adenosine threonylcarbamoyltransferase (338 aa).

Positions 109 and 113 each coordinate Fe cation. Substrate is bound by residues 132 to 136, D165, G178, and N277; that span reads AISGA. D302 serves as a coordination point for Fe cation.

This sequence belongs to the KAE1 / TsaD family. It depends on Fe(2+) as a cofactor.

The protein localises to the cytoplasm. It carries out the reaction L-threonylcarbamoyladenylate + adenosine(37) in tRNA = N(6)-L-threonylcarbamoyladenosine(37) in tRNA + AMP + H(+). Its function is as follows. Required for the formation of a threonylcarbamoyl group on adenosine at position 37 (t(6)A37) in tRNAs that read codons beginning with adenine. Is involved in the transfer of the threonylcarbamoyl moiety of threonylcarbamoyl-AMP (TC-AMP) to the N6 group of A37, together with TsaE and TsaB. TsaD likely plays a direct catalytic role in this reaction. The sequence is that of tRNA N6-adenosine threonylcarbamoyltransferase from Chlamydia trachomatis serovar A (strain ATCC VR-571B / DSM 19440 / HAR-13).